The chain runs to 372 residues: tRNA pseudouridine synthase D (372 aa).

D85 serves as the catalytic Nucleophile. In terms of domain architecture, TRUD spans 160 to 330 (GFTNYFGYQR…MQGSRRFMWG (171 aa)).

This sequence belongs to the pseudouridine synthase TruD family.

The enzyme catalyses uridine(13) in tRNA = pseudouridine(13) in tRNA. Responsible for synthesis of pseudouridine from uracil-13 in transfer RNAs. The chain is tRNA pseudouridine synthase D from Campylobacter jejuni (strain RM1221).